A 30-amino-acid polypeptide reads, in one-letter code: Cliotide T6 (30 aa).

The segment at residues 1–30 (SIPCGESCVYIPCITTIVGCSCKDKVCYKN) is a cross-link (cyclopeptide (Ser-Asn)). Disulfide bonds link Cys4-Cys20, Cys8-Cys22, and Cys13-Cys27.

Contains 3 disulfide bonds. Post-translationally, this is a cyclic peptide. As to expression, expressed in pod but not in flower, stem, shoot, leaf, seed, root and nodule (at protein level).

Functionally, probably participates in a plant defense mechanism. The chain is Cliotide T6 from Clitoria ternatea (Butterfly pea).